Consider the following 200-residue polypeptide: Small ribosomal subunit protein eS8B (200 aa).

The segment at 1–41 (MGITRDSRHKRSATGAKRAQYRKKRKFELGRQPSNTRIGPK) is disordered. Residues S62 and S99 each carry the phosphoserine modification. Positions 124–145 (KGKKATATPTPKSKHVQRKHSA) are disordered. A compositionally biased stretch (basic residues) spans 135–145 (KSKHVQRKHSA). A phosphoserine mark is found at S150, S154, and S171.

It belongs to the eukaryotic ribosomal protein eS8 family. In terms of assembly, component of the small ribosomal subunit (SSU). Mature yeast ribosomes consist of a small (40S) and a large (60S) subunit. The 40S small subunit contains 1 molecule of ribosomal RNA (18S rRNA) and at least 33 different proteins. The large 60S subunit contains 3 rRNA molecules (25S, 5.8S and 5S rRNA) and at least 46 different proteins.

It localises to the cytoplasm. Functionally, component of the ribosome, a large ribonucleoprotein complex responsible for the synthesis of proteins in the cell. The small ribosomal subunit (SSU) binds messenger RNAs (mRNAs) and translates the encoded message by selecting cognate aminoacyl-transfer RNA (tRNA) molecules. The large subunit (LSU) contains the ribosomal catalytic site termed the peptidyl transferase center (PTC), which catalyzes the formation of peptide bonds, thereby polymerizing the amino acids delivered by tRNAs into a polypeptide chain. The nascent polypeptides leave the ribosome through a tunnel in the LSU and interact with protein factors that function in enzymatic processing, targeting, and the membrane insertion of nascent chains at the exit of the ribosomal tunnel. The polypeptide is Small ribosomal subunit protein eS8B (rps802) (Schizosaccharomyces pombe (strain 972 / ATCC 24843) (Fission yeast)).